Consider the following 276-residue polypeptide: Thiazole synthase (276 aa).

The active-site Schiff-base intermediate with DXP is the K117. 1-deoxy-D-xylulose 5-phosphate contacts are provided by residues G178, A204–G205, and N226–T227.

The protein belongs to the ThiG family. As to quaternary structure, homotetramer. Forms heterodimers with either ThiH or ThiS.

It localises to the plastid. The protein localises to the chloroplast. It catalyses the reaction [ThiS sulfur-carrier protein]-C-terminal-Gly-aminoethanethioate + 2-iminoacetate + 1-deoxy-D-xylulose 5-phosphate = [ThiS sulfur-carrier protein]-C-terminal Gly-Gly + 2-[(2R,5Z)-2-carboxy-4-methylthiazol-5(2H)-ylidene]ethyl phosphate + 2 H2O + H(+). It functions in the pathway cofactor biosynthesis; thiamine diphosphate biosynthesis. Its function is as follows. Catalyzes the rearrangement of 1-deoxy-D-xylulose 5-phosphate (DXP) to produce the thiazole phosphate moiety of thiamine. Sulfur is provided by the thiocarboxylate moiety of the carrier protein ThiS. In vitro, sulfur can be provided by H(2)S. The protein is Thiazole synthase of Gracilaria tenuistipitata var. liui (Red alga).